The sequence spans 263 residues: 3'-5' ssDNA/RNA exonuclease TatD (263 aa).

Glutamate 92, histidine 128, and histidine 153 together coordinate a divalent metal cation.

The protein belongs to the metallo-dependent hydrolases superfamily. TatD-type hydrolase family. TatD subfamily. As to quaternary structure, monomer. It depends on Mg(2+) as a cofactor.

The protein resides in the cytoplasm. Functionally, 3'-5' exonuclease that prefers single-stranded DNA and RNA. May play a role in the H(2)O(2)-induced DNA damage repair. In Rahnella sp. (strain Y9602), this protein is 3'-5' ssDNA/RNA exonuclease TatD.